Consider the following 109-residue polypeptide: Nascent polypeptide-associated complex protein (109 aa).

Residues 3–69 (PMNPKQLKKL…TEEERVVLKI (67 aa)) form the NAC-A/B domain.

Belongs to the NAC-alpha family. In terms of assembly, homodimer. Interacts with the ribosome. Binds ribosomal RNA.

Contacts the emerging nascent chain on the ribosome. The protein is Nascent polypeptide-associated complex protein of Pyrococcus abyssi (strain GE5 / Orsay).